A 121-amino-acid chain; its full sequence is uncharacterized protein (121 aa).

Disordered regions lie at residues M1–R41 and G94–R121. Residues S98–P108 are compositionally biased toward polar residues.

In terms of tissue distribution, predominantly expressed in tissues containing motile cilia. Also expressed in non-motile ciliated adult olfactory bulbs.

It is found in the cytoplasm. The protein localises to the cytoskeleton. It localises to the cilium basal body. This is an uncharacterized protein from Mus musculus (Mouse).